The following is a 118-amino-acid chain: MTANTLKRKISLRIKRKRKIRANISGSAVCPRISIFKSNRTIYAQAIDDTNSKTLCASSGTALKIKANKDGAAILAKDFAEKLKAAKISEAIFDRNGYLYHGVVAAFADALRKNGIKL.

Belongs to the universal ribosomal protein uL18 family. Part of the 50S ribosomal subunit; part of the 5S rRNA/L5/L18/L25 subcomplex. Contacts the 5S and 23S rRNAs.

Its function is as follows. This is one of the proteins that bind and probably mediate the attachment of the 5S RNA into the large ribosomal subunit, where it forms part of the central protuberance. The chain is Large ribosomal subunit protein uL18 from Campylobacter hominis (strain ATCC BAA-381 / DSM 21671 / CCUG 45161 / LMG 19568 / NCTC 13146 / CH001A).